Here is a 76-residue protein sequence, read N- to C-terminus: Protein RALF-like 26 (76 aa).

The first 22 residues, 1 to 22 (MKAWMIILLVICVAVVVEQSEA), serve as a signal peptide directing secretion. Cysteine 37 and cysteine 46 are oxidised to a cystine. N-linked (GlcNAc...) asparagine glycosylation occurs at asparagine 61. Cysteine 66 and cysteine 72 are joined by a disulfide.

It belongs to the plant rapid alkalinization factor (RALF) family.

It localises to the secreted. In terms of biological role, cell signaling peptide that may regulate plant stress, growth, and development. Mediates a rapid alkalinization of extracellular space by mediating a transient increase in the cytoplasmic Ca(2+) concentration leading to a calcium-dependent signaling events through a cell surface receptor and a concomitant activation of some intracellular mitogen-activated protein kinases. The chain is Protein RALF-like 26 (RALFL26) from Arabidopsis thaliana (Mouse-ear cress).